Here is a 277-residue protein sequence, read N- to C-terminus: Urease accessory protein UreD (277 aa).

Belongs to the UreD family. As to quaternary structure, ureD, UreF and UreG form a complex that acts as a GTP-hydrolysis-dependent molecular chaperone, activating the urease apoprotein by helping to assemble the nickel containing metallocenter of UreC. The UreE protein probably delivers the nickel.

It localises to the cytoplasm. Functionally, required for maturation of urease via the functional incorporation of the urease nickel metallocenter. In Pseudomonas putida (strain W619), this protein is Urease accessory protein UreD.